We begin with the raw amino-acid sequence, 2375 residues long: Talin-2 (2375 aa).

Residues R88 to K406 form the FERM domain. Residues G312–K406 are interaction with PIP5K1C. S428, S450, S624, and S1024 each carry phosphoserine. Y1666 bears the Phosphotyrosine mark. The I/LWEQ domain occupies T2205–V2375.

Interacts directly with PIP5K1C.

The protein resides in the cytoplasm. The protein localises to the cell junction. Its subcellular location is the focal adhesion. It is found in the synapse. It localises to the cell membrane. The protein resides in the cytoskeleton. Functionally, as a major component of focal adhesion plaques that links integrin to the actin cytoskeleton, may play an important role in cell adhesion. Recruits PIP5K1C to focal adhesion plaques and strongly activates its kinase activity. The protein is Talin-2 (Tln2) of Mus musculus (Mouse).